Here is a 150-residue protein sequence, read N- to C-terminus: UPF0756 membrane protein APL_0366 (150 aa).

A run of 4 helical transmembrane segments spans residues 12 to 34, 52 to 72, 82 to 102, and 123 to 143; these read LVVLIFLGVVGNNNSITIAATVL, HGLSIGIIILTIGVLSPIVSG, FLNWKMLLAVVAGIAVAWLGG, and IIGVALLGGVPVGPLIAAGIL.

It belongs to the UPF0756 family.

The protein resides in the cell membrane. In Actinobacillus pleuropneumoniae serotype 5b (strain L20), this protein is UPF0756 membrane protein APL_0366.